An 84-amino-acid polypeptide reads, in one-letter code: ATP synthase subunit c (84 aa).

Transmembrane regions (helical) follow at residues 8–28 (VAGM…GGGI) and 56–76 (IIGS…AILL).

It belongs to the ATPase C chain family. In terms of assembly, F-type ATPases have 2 components, F(1) - the catalytic core - and F(0) - the membrane proton channel. F(1) has five subunits: alpha(3), beta(3), gamma(1), delta(1), epsilon(1). F(0) has three main subunits: a(1), b(2) and c(10-14). The alpha and beta chains form an alternating ring which encloses part of the gamma chain. F(1) is attached to F(0) by a central stalk formed by the gamma and epsilon chains, while a peripheral stalk is formed by the delta and b chains.

The protein resides in the cell membrane. F(1)F(0) ATP synthase produces ATP from ADP in the presence of a proton or sodium gradient. F-type ATPases consist of two structural domains, F(1) containing the extramembraneous catalytic core and F(0) containing the membrane proton channel, linked together by a central stalk and a peripheral stalk. During catalysis, ATP synthesis in the catalytic domain of F(1) is coupled via a rotary mechanism of the central stalk subunits to proton translocation. In terms of biological role, key component of the F(0) channel; it plays a direct role in translocation across the membrane. A homomeric c-ring of between 10-14 subunits forms the central stalk rotor element with the F(1) delta and epsilon subunits. The chain is ATP synthase subunit c from Clostridium novyi (strain NT).